The primary structure comprises 42 residues: uncharacterized protein (42 aa).

A helical transmembrane segment spans residues valine 18–leucine 38.

The protein resides in the host membrane. This is an uncharacterized protein from His1 virus (isolate Australia/Victoria) (His1V).